We begin with the raw amino-acid sequence, 421 residues long: FAD-dependent monooxygenase atnJ (421 aa).

Residues Leu9–Ala29 traverse the membrane as a helical segment. Residues Glu41 and Ala54 each contribute to the FAD site. Arg188 is a catalytic residue. FAD is bound by residues Asp303 and Val316. The interval Arg371 to Asn392 is disordered.

Belongs to the paxM FAD-dependent monooxygenase family. FAD is required as a cofactor.

Its subcellular location is the membrane. It participates in secondary metabolite biosynthesis; terpenoid biosynthesis. In terms of biological role, FAD-dependent monooxygenase; part of the gene cluster that mediates the biosynthesis of the meroterpenoids arthripenoids. The pathway begins with the HR-PKS atnH that catalyzes two chain-extension steps to form a reduced triketide, which then primes the SAT domain in the NR-PKS atnG to initiate three more cycles of extension to give a linear hexaketide corresponding to the polyketide part of arthripenoids. The FAD-dependent monooxygenase atnJ then performs an oxidative decarboxylation at C11 of the atnH/atnG product, via an electrophilic aromatic hydroxylation with concomitant ipso-decarboxylation. The membrane-bound polyprenyl transferase atnF then introduces a farnesyl group before the FAD-dependent monooxygenase atnK functions as the first epoxidase on terminal C12'-C13' olefin, followed by a second epoxidation on C7'-C8' catalyzed by atnA. The terpene cyclase/mutase atnI then initiates the sequential tricyclic ring formation through protonation of the terminal epoxide and catalyzes the regioselective and stereoselective 6/6/6-tricyclic ring formation. The cytochrome P450 monooxygenase atnM is responsible for hydroxylating both C1' and C10'. The next steps may involve ketoreduction and acetyl transfer by the ketoreductase atnB and the acetyltransferase atnC, and lead to the production of arthripenoid B, the final biosynthetic product of the atn cluster. The hydroquinone moiety in arthripenoid B is prone to undergo spontaneous oxidation to afford a benzoquinone compound, a key intermediate for generating structure diversity. For instance, addition of a cysteine followed by ring contraction gives arthripenoid A, tautomerization gives the main product arthripenoid C, addition of a molecular of water or amine affords arthripenoid D or E, respectively, and loss of one water forms arthripenoid F. This Arthrinium sp protein is FAD-dependent monooxygenase atnJ.